Consider the following 238-residue polypeptide: Proteasome subunit beta type-6 (238 aa).

Residue Ala2 is modified to N-acetylalanine. Positions 2-33 are cleaved as a propeptide — removed in mature form; it reads AAALAVRGAVSAPAFGPEALTPDWENREVSTG. The active-site Nucleophile is the Thr34. Position 68 is a phosphothreonine (Thr68).

The protein belongs to the peptidase T1B family. In terms of assembly, the 26S proteasome consists of a 20S proteasome core and two 19S regulatory subunits. The 20S proteasome core is a barrel-shaped complex made of 28 subunits that are arranged in four stacked rings. The two outer rings are each formed by seven alpha subunits, and the two inner rings are formed by seven beta subunits. The proteolytic activity is exerted by three beta-subunits PSMB5, PSMB6 and PSMB7.

It localises to the cytoplasm. Its subcellular location is the nucleus. It carries out the reaction Cleavage of peptide bonds with very broad specificity.. Component of the 20S core proteasome complex involved in the proteolytic degradation of most intracellular proteins. This complex plays numerous essential roles within the cell by associating with different regulatory particles. Associated with two 19S regulatory particles, forms the 26S proteasome and thus participates in the ATP-dependent degradation of ubiquitinated proteins. The 26S proteasome plays a key role in the maintenance of protein homeostasis by removing misfolded or damaged proteins that could impair cellular functions, and by removing proteins whose functions are no longer required. Associated with the PA200 or PA28, the 20S proteasome mediates ubiquitin-independent protein degradation. This type of proteolysis is required in several pathways including spermatogenesis (20S-PA200 complex) or generation of a subset of MHC class I-presented antigenic peptides (20S-PA28 complex). Within the 20S core complex, PSMB6 displays a peptidylglutamyl-hydrolyzing activity also termed postacidic or caspase-like activity, meaning that the peptides bond hydrolysis occurs directly after acidic residues. The chain is Proteasome subunit beta type-6 (Psmb6) from Rattus norvegicus (Rat).